Here is an 83-residue protein sequence, read N- to C-terminus: Subtilisin-chymotrypsin inhibitor CI-1A (83 aa).

The tract at residues 1-24 (MSSMEGSVLKYPEPTEGSIGASSA) is disordered.

It belongs to the protease inhibitor I13 (potato type I serine protease inhibitor) family.

In terms of biological role, inhibits both subtilisin and chymotrypsin. The sequence is that of Subtilisin-chymotrypsin inhibitor CI-1A from Hordeum vulgare (Barley).